Consider the following 2147-residue polypeptide: MEGPSRVYLFGDQTSDIEAGLRRLLQAKNSTIVQSFFQQCFHAIRQEIAKLPPSQRKLFPRFTSIVDLLSKSRESGPSPVLESALTCIYQLGCFIHYYGDLGHGYPTPSNSHLVGLCLGVLSCTAVSCAKNVGELIPAAVEAVVVALRLGICVFRVRELVDSGDSESTCWSALISGISETEASRLIDEYSNKKATPPSSKPYISAVSSNGVTVSAPPTVLDEFIGTCISKNYKPVKAPIHGPYHAPHLYDNKDIERILQQSSALESLTASSPTVPVISSNTGKPINAKSTRDLFKVALEEILLRRLCWDKVTESCTSVCKTGTNHSCKLFPISSSATQSLFTALKKAGVNISLETGVGEIATNPDMRNLTGKAECSKIAIIGMSGRFPDADGTESFWDLLYKGLDVHRKVPADRWDVDAHVDLTGSKRNTSKVPYGCWINEPGLFDPRFFNMSPREALQADPAQRLALLTAYEALEMAGFIPDSSPSTQRDRVGIFYGMTSDDYREINSGQDIDTYFIPGGNRAFTPGRINYYFKFSGPSVSVDTACSSSLAAIHMACNSIWRNDCDAAITGGVNILTNPDNHAGLDRGHFLSTTGNCNTFDDGADGYCRADGVGSIVLKRLEDAEADNDPILAVINGAYTNHSAEAVSITRPHVGAQAFIFNKLLNDANIDPKEVSYVEMHGTGTQAGDAVEMQSVLDVFAPDYRRGPGQSLHIGSAKANIGHGESASGVTALVKVLLMMRENMIPPHCGIKTKINHNFPTDLAKRNVHIAFQPTPWNRPASGKRRSFVNNFSAAGGNTAILLEDAPIPERQGQDPRAFHLVSVSARSQSALKNNIESLVKYIDSQGKSFGVKETEFLPNLAYTTTARRIHHPFRVTAVGANLQSLRDSLHGALHRETYTPVPSTAPGIGFVFTGQGAQYTGMGKELYSTCFQFRTTIEHFDCIARSQGLPSILPLVDGSVPVEDLSPVVVQVGTTCVQMALVNYWTALGVKPAFIIGHSLGDYAALNTAGVLSTSDTIYLCGRRAQLLTKECKIGTHSMLAIKASLAEVKQFLKDELHEVSCVNAPAETVVSGLVADIDDLAQKCSTEGLKSTKLRVPYAFHSSQVDPILDTFEEIAQGVTFHKPTTPFVSALFGEVITDANWECLGPKYLRDHCRKTVNFLGGVEATRHAKLTNDKTLWVEIGSHTICSGMIKATLGPQVTTVASLRREEDTWKVLSNSLSSLHLAGIDINWKQYHQDFSSSHQVLRLPSYKWDLKNYWIPYTNNFCLHKGAPVAAVAAGPQHEFLTTAAQKVIETRSDGATATVVVENDIADPDLNRVIQGHKVNGAALCPSSLYADISQTLAEYLIKKYKPEYDGLGLDVCEVTVPRPLIAKSGQQLFRVSATADWAEKKVTLQVYSVTAEGKKTADHATCTVRFFDCAAAEAEWKRVSYLVKRSIDRLHDIAENGDAHRLGRGMVYKLFAALVDYDDNFKSIREVILDSEQHEATARVKFQAPQGNFHRNPFWIDSFGHLSGFIMNASDATDSKNQVFVNHGWDSMRCLKKFSPDVTYRTYVRMQPWKDSIWAGDVYVFDGDDIVAVYGAVKFQGLSRKILDTVLPPVGASKGPARPAASAQKAAPAATSKSRASAPAPAKAVAKPSAPSLVKRALTILAEEVGLSESELTDELVFADYGVDSLLSLTVTGRYREELDIDLESSVFIDQPTVKDFKQFLAPMSQGEASDGSTSDPESSSSFNGGSSTDESSAGSPVSSPPNEKIEQHATMKEIRAILADEIGVSEEELKDDENLGEMGMDSLLSLTVLGRIRETLDLDLPGEFFIENQTLNDVEDALGLKPKVAPAPAPTPAPAPVSAPILSEPVPNPKSTIMTRASPHPRSTSILLQGNPKTATKTLFLFPDGSGSATSYATIPGVSPDVCVYGLNCPYMKTPEKLKYPLAEMTFPYLAEIRRRQPKGPYNFGGWSAGGICAYDAARYLILEEGERVDRLLLLDSPFPIGLEKLPTRLYGFINSKGLFGEGNKAPPSWLLPHFLAFIDSLDTYRAVPLPFDDPKWANKMPKTFLVWAKDGICNKPDDPWPEPDPDGKPDTREMVWLLKNRTDMGPNKWDTLVGPANVGGISVIEGANHFTMTLGPKAKELGSFIGNAMAN.

The tract at residues 8–244 (YLFGDQTSDI…VKAPIHGPYH (237 aa)) is N-terminal acylcarrier protein transacylase domain (SAT). Residues 375–806 (CSKIAIIGMS…GGNTAILLED (432 aa)) form the Ketosynthase family 3 (KS3) domain. Residues Cys547, His682, and His724 each act as for beta-ketoacyl synthase activity in the active site. Residues 912-1232 (FVFTGQGAQY…LSSLHLAGID (321 aa)) are malonyl-CoA:ACP transacylase (MAT) domain. Catalysis depends on Ser1001, which acts as the For acyl/malonyl transferase activity. The interval 1286–1425 (HEFLTTAAQK…CTVRFFDCAA (140 aa)) is N-terminal hotdog fold. Residues 1286 to 1598 (HEFLTTAAQK…FQGLSRKILD (313 aa)) enclose the PKS/mFAS DH domain. The interval 1290-1603 (TTAAQKVIET…RKILDTVLPP (314 aa)) is product template (PT) domain. His1326 (proton acceptor; for dehydratase activity) is an active-site residue. Residues 1452-1598 (DAHRLGRGMV…FQGLSRKILD (147 aa)) form a C-terminal hotdog fold region. Asp1511 (proton donor; for dehydratase activity) is an active-site residue. Residues 1608–1637 (KGPARPAASAQKAAPAATSKSRASAPAPAK) are disordered. Residues 1610–1637 (PARPAASAQKAAPAATSKSRASAPAPAK) are compositionally biased toward low complexity. A Carrier 1 domain is found at 1642 to 1719 (PSAPSLVKRA…DFKQFLAPMS (78 aa)). Ser1679 carries the O-(pantetheine 4'-phosphoryl)serine modification. Residues 1719–1759 (SQGEASDGSTSDPESSSSFNGGSSTDESSAGSPVSSPPNEK) form a disordered region. Residues 1724 to 1747 (SDGSTSDPESSSSFNGGSSTDESS) show a composition bias toward low complexity. The 78-residue stretch at 1760–1837 (IEQHATMKEI…DVEDALGLKP (78 aa)) folds into the Carrier 2 domain. Ser1797 is subject to O-(pantetheine 4'-phosphoryl)serine. A claisen cyclase domain region spans residues 1873–2145 (SPHPRSTSIL…ELGSFIGNAM (273 aa)). Ser1963 functions as the For Claisen cyclase activity in the catalytic mechanism.

It carries out the reaction 6 malonyl-CoA + acetyl-CoA + 6 H(+) = naphtopyrone YWA1 + 6 CO2 + 7 CoA + H2O. It functions in the pathway secondary metabolite biosynthesis. Non-reducing polyketide synthase involved in the biosynthesis of bifonsecin B, a dimeric gamma-naphthopyrone. The first step in the biosynthesis of bifonsecin B is the production of gamma-naphthopyrone precursor YWA1 by the non-reducing polyketide synthase albA, via condensation of one acetyl-CoA starter unit with 6 malonyl-CoA units. YWA1 is then methylated by bfoE at position C-6 to yield foncesin which is further methylated at position C-8 by bfoD to produce fonsecin B. A key enzyme in the biosynthetic pathway is the cytochrome P450 monooxygenase bfoB which catalyzes the oxidative dimerization of fonsecin B to bifonsecin B. Bfob also catalyzes the oxidative dimerization of rubrofusarin B into nigerone. The stereoselectivity of bfoB is influenced by the two natural monomeric substrates; homodimerization of fonsecin B yields a stereochemically pure biaryl, M-foncerine B, while rubrofusarin B yields a mixture of enantiomers M- and P-nigerone. This chain is Non-reducing polyketide synthase albA, found in Aspergillus brasiliensis (strain CBS 101740 / IMI 381727 / IBT 21946).